Reading from the N-terminus, the 336-residue chain is D-alanine--D-alanine ligase (336 aa).

Residues 124–330 (KMWFSALGIP…FTQYLSLVIN (207 aa)) enclose the ATP-grasp domain. Position 154 to 209 (154 to 209 (ALEKWGSIFVKAASQGSSVGCYKVDEASKVLGVLKDAFGYAPYVIVEKTIKARELE)) interacts with ATP. Residues aspartate 284, glutamate 297, and asparagine 299 each contribute to the Mg(2+) site.

It belongs to the D-alanine--D-alanine ligase family. Requires Mg(2+) as cofactor. Mn(2+) serves as cofactor.

Its subcellular location is the cytoplasm. The enzyme catalyses 2 D-alanine + ATP = D-alanyl-D-alanine + ADP + phosphate + H(+). It functions in the pathway cell wall biogenesis; peptidoglycan biosynthesis. In terms of biological role, cell wall formation. This is D-alanine--D-alanine ligase from Shewanella oneidensis (strain ATCC 700550 / JCM 31522 / CIP 106686 / LMG 19005 / NCIMB 14063 / MR-1).